Consider the following 493-residue polypeptide: Transmembrane protein 145 (493 aa).

A helical transmembrane segment spans residues 9-29 (LRRLLPPLLLLLLSLPPRARA). A glycan (N-linked (GlcNAc...) asparagine) is linked at Asn-35. The next 7 membrane-spanning stretches (helical) occupy residues 175 to 195 (VTFLLIFILIFFLSCYFGYLL), 207 to 227 (MFMAAAGVEVLSLLFFCIYWG), 241 to 261 (ILAKLLFSSSFLIFLLMLILL), 282 to 302 (VYMTLYTLTHVVLLIYEAEFF), 318 to 338 (GLIGLQVAAYVWFCYAVLVSL), 349 to 369 (VPFFAAYTLWFFAVPVMALIA), and 381 to 401 (IVNGIQLGIHLYAHGVFLIMT). A glycan (N-linked (GlcNAc...) asparagine) is linked at Asn-444. Positions 464–493 (PATSPLPRAAPDSGLPLFRDLRPPGPLRDL) are disordered.

Its subcellular location is the membrane. In Homo sapiens (Human), this protein is Transmembrane protein 145 (TMEM145).